The primary structure comprises 255 residues: Formate hydrogenlyase subunit 7 (255 aa).

[4Fe-4S] cluster is bound by residues cysteine 45, cysteine 51, cysteine 115, and cysteine 145.

The protein belongs to the complex I 20 kDa subunit family. As to quaternary structure, FHL comprises of a formate dehydrogenase, unidentified electron carriers and a hydrogenase (isoenzyme 3). In this non-energy conserving pathway molecular hydrogen and carbodioxide from formate are released. The cofactor is [4Fe-4S] cluster.

The chain is Formate hydrogenlyase subunit 7 (hycG) from Escherichia coli (strain K12).